Reading from the N-terminus, the 171-residue chain is Homeobox protein engrailed-1-B (171 aa).

2 disordered regions span residues 1 to 41 (EDPG…NAAP) and 60 to 86 (YSDR…KRPR). Positions 15 to 29 (PDSDTPSDSSKGSDS) are enriched in low complexity. A DNA-binding region (homeobox) is located at residues 82-141 (DKRPRTAFTAEQLQRLKAEFQANRYITEQRRQTLAQELSLNESQIKIWFQNKRAKIKKAS).

This sequence belongs to the engrailed homeobox family.

It localises to the nucleus. Its function is as follows. Required for proper formation of the apical ectodermal ridge and correct dorsal-ventral patterning in the limb. This Xenopus laevis (African clawed frog) protein is Homeobox protein engrailed-1-B (en1-b).